Here is a 304-residue protein sequence, read N- to C-terminus: tRNA pseudouridine synthase B (304 aa).

Residue Asp40 is the Nucleophile of the active site.

The protein belongs to the pseudouridine synthase TruB family. Type 1 subfamily.

It catalyses the reaction uridine(55) in tRNA = pseudouridine(55) in tRNA. In terms of biological role, responsible for synthesis of pseudouridine from uracil-55 in the psi GC loop of transfer RNAs. This is tRNA pseudouridine synthase B from Halalkalibacterium halodurans (strain ATCC BAA-125 / DSM 18197 / FERM 7344 / JCM 9153 / C-125) (Bacillus halodurans).